A 361-amino-acid polypeptide reads, in one-letter code: MSPECARAAGDAPLRSLEQANRTRFPFFSDVKGDHRLVLAAVETTVLVLIFAVSLLGNVCALVLVARRRRRGATACLVLNLFCADLLFISAIPLVLAVRWTEAWLLGPVACHLLFYVMTLSGSVTILTLAAVSLERMVCIVHLQRGVRGPGRRARAVLLALIWGYSAVAALPLCVFFRVVPQRLPGADQEISICTLIWPTIPGEISWDVSFVTLNFLVPGLVIVISYSKILQITKASRKRLTVSLAYSESHQIRVSQQDFRLFRTLFLLMVSFFIMWSPIIITILLILIQNFKQDLVIWPSLFFWVVAFTFANSALNPILYNMTLCRNEWKKIFCCFWFPEKGAILTDTSVKRNDLSIISG.

Residues 1 to 45 are Extracellular-facing; sequence MSPECARAAGDAPLRSLEQANRTRFPFFSDVKGDHRLVLAAVETT. Asparagine 21 carries N-linked (GlcNAc...) asparagine glycosylation. A helical transmembrane segment spans residues 46 to 66; it reads VLVLIFAVSLLGNVCALVLVA. At 67-77 the chain is on the cytoplasmic side; the sequence is RRRRRGATACL. The chain crosses the membrane as a helical span at residues 78–98; that stretch reads VLNLFCADLLFISAIPLVLAV. Topologically, residues 99 to 112 are extracellular; that stretch reads RWTEAWLLGPVACH. Cysteine 111 and cysteine 194 are oxidised to a cystine. The chain crosses the membrane as a helical span at residues 113–133; it reads LLFYVMTLSGSVTILTLAAVS. The Cytoplasmic portion of the chain corresponds to 134 to 156; it reads LERMVCIVHLQRGVRGPGRRARA. The helical transmembrane segment at 157 to 177 threads the bilayer; sequence VLLALIWGYSAVAALPLCVFF. Over 178 to 204 the chain is Extracellular; the sequence is RVVPQRLPGADQEISICTLIWPTIPGE. Residues 205-225 form a helical membrane-spanning segment; that stretch reads ISWDVSFVTLNFLVPGLVIVI. Over 226-268 the chain is Cytoplasmic; the sequence is SYSKILQITKASRKRLTVSLAYSESHQIRVSQQDFRLFRTLFL. Residues 269–289 traverse the membrane as a helical segment; sequence LMVSFFIMWSPIIITILLILI. The Extracellular portion of the chain corresponds to 290–295; sequence QNFKQD. Residues 296 to 316 traverse the membrane as a helical segment; the sequence is LVIWPSLFFWVVAFTFANSAL. The Cytoplasmic segment spans residues 317–361; the sequence is NPILYNMTLCRNEWKKIFCCFWFPEKGAILTDTSVKRNDLSIISG. Residues threonine 347 and threonine 349 each carry the phosphothreonine modification. A phosphoserine mark is found at serine 350, serine 357, and serine 360.

The protein belongs to the G-protein coupled receptor 1 family. Interacts (via C-terminus) with ARRB2 following LCFAs stimulation. In terms of processing, phosphorylated at two clusters of Ser and Thr residues located in the intracellular C-terminus, a prerequisite for FFAR4 internalization via an ARRB2-dependent pathway. The predominant isoform in human tissues. Expressed in adipose tissue, pancreatic islets, lung and brain. Expressed in alpha cells of pancreatic islets. Expressed in primary cilia of perivascular preadipocytes of white adipose tissue (at protein level). As to expression, abundant expression in the intestinal tract. Expressed in colonic intraepithelial neuroendocrine cells.

The protein resides in the cell membrane. Its subcellular location is the endosome membrane. It is found in the lysosome membrane. The protein localises to the cell projection. It localises to the cilium membrane. In terms of biological role, G-protein-coupled receptor for long-chain fatty acids (LCFAs) with a major role in adipogenesis, energy metabolism and inflammation. Signals via G-protein and beta-arrestin pathways. LCFAs sensing initiates activation of phosphoinositidase C-linked G proteins GNAQ and GNA11 (G(q)/G(11)), inducing a variety of cellular responses via second messenger pathways such as intracellular calcium mobilization, modulation of cyclic adenosine monophosphate (cAMP) production, and mitogen-activated protein kinases (MAPKs). After LCFAs binding, associates with beta-arrestin ARRB2 that acts as an adapter protein coupling the receptor to specific downstream signaling pathways, as well as mediating receptor endocytosis. In response to dietary fats, plays an important role in the regulation of adipocyte proliferation and differentiation. Acts as a receptor for omega-3 polyunsaturated fatty acids (PUFAs) at primary cilium of perivascular preadipocytes, initiating an adipogenic program via cAMP and CTCF-dependent chromatin remodeling that ultimately results in transcriptional activation of adipogenic genes and cell cycle entry. Induces differentiation of brown adipocytes probably via autocrine and endocrine functions of FGF21 hormone. Activates brown adipocytes by initiating intracellular calcium signaling that leads to mitochondrial depolarization and fission, and overall increased mitochondrial respiration. Consequently stimulates fatty acid uptake and oxidation in mitochondria together with UCP1-mediated thermogenic respiration, eventually reducing fat mass. Regulates bi-potential differentiation of bone marrow mesenchymal stem cells toward osteoblasts or adipocytes likely by up-regulating distinct integrins. In response to dietary fats regulates hormone secretion and appetite. Stimulates GIP and GLP1 secretion from enteroendocrine cells as well as GCG secretion in pancreatic alpha cells, thereby playing a role in the regulation of blood glucose levels. Negatively regulates glucose-induced SST secretion in pancreatic delta cells. Mediates LCFAs inhibition of GHRL secretion, an appetite-controlling hormone. In taste buds, contributes to sensing of dietary fatty acids by the gustatory system. During the inflammatory response, promotes anti-inflammatory M2 macrophage differentiation in adipose tissue. Mediates the anti-inflammatory effects of omega-3 PUFAs via inhibition of NLRP3 inflammasome activation. In this pathway, interacts with adapter protein ARRB2 and inhibits the priming step triggered by Toll-like receptors (TLRs) at the level of TAK1 and TAB1. Further inhibits the activation step when ARRB2 directly associates with NLRP3, leading to inhibition of pro-inflammatory cytokine release. Mediates LCFAs anti-apoptotic effects. Functionally, receptor for LCFAs decoupled from G-protein signaling. May signal through beta-arrestin pathway. After LCFAs binding, associates with beta-arrestin ARRB2 that may act as an adapter protein coupling the receptor to specific downstream signaling pathways, as well as mediating receptor endocytosis. This is Free fatty acid receptor 4 from Homo sapiens (Human).